Reading from the N-terminus, the 271-residue chain is Transmembrane protein 150A (271 aa).

Topologically, residues Met-1–Gly-3 are cytoplasmic. The chain crosses the membrane as a helical span at residues Trp-4 to Ala-24. The Extracellular segment spans residues Met-25–Glu-75. N-linked (GlcNAc...) asparagine glycans are attached at residues Asn-37 and Asn-41. A helical transmembrane segment spans residues Ser-76–Leu-96. Topologically, residues Arg-97–Ser-108 are cytoplasmic. A helical transmembrane segment spans residues Trp-109 to Gly-129. The Extracellular segment spans residues Asn-130 to His-140. A helical transmembrane segment spans residues Tyr-141–Leu-161. The Cytoplasmic portion of the chain corresponds to Ser-162–Thr-182. The helical transmembrane segment at Ile-183 to Met-203 threads the bilayer. At Gln-204–His-205 the chain is on the extracellular side. Residues Leu-206–Ala-226 form a helical membrane-spanning segment. The Cytoplasmic portion of the chain corresponds to Tyr-227–Ile-271.

Belongs to the DRAM/TMEM150 family.

It localises to the cell membrane. Regulates localization of phosphatidylinositol 4-kinase (PI4K) to the plasma membrane. This is Transmembrane protein 150A (tmem150a) from Xenopus laevis (African clawed frog).